Reading from the N-terminus, the 115-residue chain is Large ribosomal subunit protein eL30 (115 aa).

This sequence belongs to the eukaryotic ribosomal protein eL30 family. In terms of assembly, component of the large ribosomal subunit.

The protein resides in the cytoplasm. Its function is as follows. Component of the large ribosomal subunit. The ribosome is a large ribonucleoprotein complex responsible for the synthesis of proteins in the cell. The chain is Large ribosomal subunit protein eL30 (RPL30) from Gallus gallus (Chicken).